The primary structure comprises 428 residues: Histidine--tRNA ligase (428 aa).

Belongs to the class-II aminoacyl-tRNA synthetase family.

Its subcellular location is the cytoplasm. The enzyme catalyses tRNA(His) + L-histidine + ATP = L-histidyl-tRNA(His) + AMP + diphosphate + H(+). This chain is Histidine--tRNA ligase, found in Korarchaeum cryptofilum (strain OPF8).